The following is a 289-amino-acid chain: MQIIRTIEELRQILAPARRAGKRIGFVPTMGYLHKGHLELVHRSRAENDVTVVSIFVNPLQFGANEDLDKYPRDLERDAALLHRADVDYLFAPAVSDMYPQPMQTVVDVPTLGNQMEGEARPGHFAGVATVVNKLFNIVGADAAYFGEKDFQQLVIIRRMVEDMAIPVRVVGVETVREEDGLACSSRNVYLSPEQRAAAIIVPKALDEAERLYRSGVDDPDALEAAIRTFIATEPLATPEVVALRDPETLERLTAVQGRPVLVALFVRLGTTRLLDNRVIAHVAQEQAA.

30-37 contacts ATP; the sequence is MGYLHKGH. Histidine 37 serves as the catalytic Proton donor. Residue glutamine 61 participates in (R)-pantoate binding. Residue glutamine 61 participates in beta-alanine binding. 147–150 provides a ligand contact to ATP; sequence GEKD. Glutamine 153 contributes to the (R)-pantoate binding site. ATP-binding positions include valine 176 and 184-187; that span reads CSSR.

Belongs to the pantothenate synthetase family. In terms of assembly, homodimer.

The protein localises to the cytoplasm. The enzyme catalyses (R)-pantoate + beta-alanine + ATP = (R)-pantothenate + AMP + diphosphate + H(+). Its pathway is cofactor biosynthesis; (R)-pantothenate biosynthesis; (R)-pantothenate from (R)-pantoate and beta-alanine: step 1/1. Functionally, catalyzes the condensation of pantoate with beta-alanine in an ATP-dependent reaction via a pantoyl-adenylate intermediate. The chain is Pantothenate synthetase from Brucella anthropi (strain ATCC 49188 / DSM 6882 / CCUG 24695 / JCM 21032 / LMG 3331 / NBRC 15819 / NCTC 12168 / Alc 37) (Ochrobactrum anthropi).